Reading from the N-terminus, the 289-residue chain is NAD kinase (289 aa).

Catalysis depends on Asp-63, which acts as the Proton acceptor. Residues 63–64, Arg-68, 138–139, Arg-149, Asp-168, 179–184, and Gln-238 contribute to the NAD(+) site; these read DG, ND, and TGYSLS.

Belongs to the NAD kinase family. Requires a divalent metal cation as cofactor.

The protein resides in the cytoplasm. The enzyme catalyses NAD(+) + ATP = ADP + NADP(+) + H(+). Its function is as follows. Involved in the regulation of the intracellular balance of NAD and NADP, and is a key enzyme in the biosynthesis of NADP. Catalyzes specifically the phosphorylation on 2'-hydroxyl of the adenosine moiety of NAD to yield NADP. In Gemmatimonas aurantiaca (strain DSM 14586 / JCM 11422 / NBRC 100505 / T-27), this protein is NAD kinase.